The chain runs to 306 residues: Glutaminase (306 aa).

Substrate-binding residues include Ser-64, Asn-115, Glu-159, Asn-166, Tyr-190, Tyr-242, and Val-260.

This sequence belongs to the glutaminase family. As to quaternary structure, homotetramer.

It catalyses the reaction L-glutamine + H2O = L-glutamate + NH4(+). The chain is Glutaminase from Vibrio vulnificus (strain YJ016).